A 248-amino-acid polypeptide reads, in one-letter code: tRNA (guanine-N(1)-)-methyltransferase (248 aa).

S-adenosyl-L-methionine contacts are provided by residues G117 and 137–142 (LGDFVL).

This sequence belongs to the RNA methyltransferase TrmD family. Homodimer.

The protein resides in the cytoplasm. It carries out the reaction guanosine(37) in tRNA + S-adenosyl-L-methionine = N(1)-methylguanosine(37) in tRNA + S-adenosyl-L-homocysteine + H(+). In terms of biological role, specifically methylates guanosine-37 in various tRNAs. The polypeptide is tRNA (guanine-N(1)-)-methyltransferase (Herminiimonas arsenicoxydans).